Here is a 258-residue protein sequence, read N- to C-terminus: Venom plasminogen activator TSV-PA (258 aa).

A signal peptide spans Met1–Ala18. Positions Gln19–Leu24 are excised as a propeptide. Residues Val25–Ala249 form the Peptidase S1 domain. 6 disulfide bridges follow: Cys31–Cys163, Cys50–Cys66, Cys98–Cys256, Cys142–Cys210, Cys174–Cys189, and Cys200–Cys225. Residues His65 and Asp110 each act as charge relay system in the active site. Asn185 carries an N-linked (GlcNAc...) asparagine glycan. Ser204 (charge relay system) is an active-site residue.

It belongs to the peptidase S1 family. Snake venom subfamily. In terms of assembly, monomer. Expressed by the venom gland.

The protein resides in the secreted. Functionally, snake venom serine protease that activates plasminogen. This is Venom plasminogen activator TSV-PA from Trimeresurus stejnegeri (Chinese green tree viper).